The primary structure comprises 278 residues: uncharacterized protein (278 aa).

The Cytoplasmic portion of the chain corresponds to 1 to 34; sequence MAKTIKVIRKKDPKKKNLSDPLAKQKLVWKIGHV. A helical transmembrane segment spans residues 35–55; sequence LTLVFGLLFSITYFYHVLIFF. The Extracellular segment spans residues 56-129; that stretch reads KYRSWKWLFL…DLLSSENFHT (74 aa). The chain crosses the membrane as a helical span at residues 130–150; it reads LLIACLWFFGGGKSFYKILPY. Over 151–180 the chain is Cytoplasmic; that stretch reads MILSYLHLTKMNYELNANKEEKIPLTPKDR. The helical transmembrane segment at 181-201 threads the bilayer; the sequence is KMLHLLAYSELLVILALTLDT. The Extracellular portion of the chain corresponds to 202–205; sequence ILFK. Residues 206–222 traverse the membrane as a helical segment; the sequence is TGTSGFMLVIYVGIYWL. Residues 223-278 are Cytoplasmic-facing; that stretch reads RLNFSPYAQVAVLELLVKFEKYVPKKYRDKWQVIKNFIYMKMKEHEKRTEEVARYA.

The protein resides in the cell membrane. This is an uncharacterized protein from Saccharomyces cerevisiae (strain ATCC 204508 / S288c) (Baker's yeast).